A 597-amino-acid chain; its full sequence is Probable tyrosine-protein phosphatase (597 aa).

Positions 55–81 (VSSSSDAAPTSISTTTTSTTSMTDASA) are enriched in low complexity. 3 disordered regions span residues 55 to 89 (VSSSSDAAPTSISTTTTSTTSMTDASANADNQQVY), 107 to 172 (SFSI…PNSL), and 188 to 228 (STNG…GNNN). Over residues 107–126 (SFSIQPNQTPTMLPTSSYTL) the composition is skewed to polar residues. The span at 136 to 151 (TSSISSISSTSSNSTS) shows a compositional bias: low complexity. 2 stretches are compositionally biased toward polar residues: residues 188–206 (STNGYTSPLPKSTNSNQPR) and 216–228 (KKSTPVNRIGNNN). Positions 428–579 (GPKNVLNNLI…LMEFGDKLNN (152 aa)) constitute a Tyrosine-protein phosphatase domain. Residue Cys516 is the Phosphocysteine intermediate of the active site.

This sequence belongs to the protein-tyrosine phosphatase family. Non-receptor class dual specificity subfamily.

It carries out the reaction O-phospho-L-tyrosyl-[protein] + H2O = L-tyrosyl-[protein] + phosphate. The polypeptide is Probable tyrosine-protein phosphatase (CPP1) (Candida albicans (strain WO-1) (Yeast)).